Reading from the N-terminus, the 253-residue chain is 5'-nucleotidase SurE (253 aa).

D8, D9, S40, and N93 together coordinate a divalent metal cation.

The protein belongs to the SurE nucleotidase family. A divalent metal cation serves as cofactor.

It localises to the cytoplasm. The catalysed reaction is a ribonucleoside 5'-phosphate + H2O = a ribonucleoside + phosphate. Its function is as follows. Nucleotidase that shows phosphatase activity on nucleoside 5'-monophosphates. This Methylobacterium sp. (strain 4-46) protein is 5'-nucleotidase SurE.